The primary structure comprises 464 residues: MSTDKTNQSWGGRFSEPVDAFVARFTASVTFDQRLYRHDIMGSIAHATMLAKVGVLTDAERDTIVDGLNTIQAEIEAGNFEWRVDLEDVHMNIEARLTDRIGITGKKLHTGRSRNDQVATDIRLWLRDEIDLILSEITRLQQGLLGQAEREAETIMPGFTHLQTAQPVTFGHHMLAWFEMLSRDYERLVDCRKRLNRMPLGSAALAGTTYPIDRELTCKLLGFDVVGGNSLDGVSDRDFAIEFCSAASIAMMHLSRFSEELVLWTSAQFQFIDLPDRFCTGSSIMPQKKNPDVPELVRGKSGRVFGALMGLLTLMKGQPLAYNKDNQEDKEPLFDAADTLRDSLRAFADMIPAIKPRHAIMREAALRGFSTATDLADYLVRRGLPFRDCHEIVGHAVKYGVETGKDLAEMSLEELRQFSNQIEQDVFAVLTLEGSVNARNHIGGTAPEQVRAAVVRGQELLAGR.

Belongs to the lyase 1 family. Argininosuccinate lyase subfamily.

It is found in the cytoplasm. The catalysed reaction is 2-(N(omega)-L-arginino)succinate = fumarate + L-arginine. The protein operates within amino-acid biosynthesis; L-arginine biosynthesis; L-arginine from L-ornithine and carbamoyl phosphate: step 3/3. This is Argininosuccinate lyase from Pseudomonas savastanoi pv. phaseolicola (strain 1448A / Race 6) (Pseudomonas syringae pv. phaseolicola (strain 1448A / Race 6)).